The sequence spans 120 residues: Large ribosomal subunit protein eL34z (120 aa).

Residues 31–51 (VYQTTKKRASGPKCPVTGKRI) form a disordered region.

This sequence belongs to the eukaryotic ribosomal protein eL34 family.

In Arabidopsis thaliana (Mouse-ear cress), this protein is Large ribosomal subunit protein eL34z (RPL34A).